The following is a 215-amino-acid chain: Uracil-DNA glycosylase (215 aa).

Aspartate 59 (proton acceptor) is an active-site residue.

This sequence belongs to the uracil-DNA glycosylase (UDG) superfamily. UNG family.

The protein resides in the cytoplasm. The enzyme catalyses Hydrolyzes single-stranded DNA or mismatched double-stranded DNA and polynucleotides, releasing free uracil.. Excises uracil residues from the DNA which can arise as a result of misincorporation of dUMP residues by DNA polymerase or due to deamination of cytosine. This chain is Uracil-DNA glycosylase, found in Aliarcobacter butzleri (strain RM4018) (Arcobacter butzleri).